A 410-amino-acid chain; its full sequence is MKSNIQLHYCYFLLSEAKKKASYIGYSVNPCRRLRQHNGEIKKGAKKTKSGVPWNLGICVGGFPDRVAALRFEWAWQHPNICKVTRDNIESWKIVKTKKTSENKRILNKRQWSIQQRVSILLCMTTLEPWKNMNLTVFVFKDELENTIKEVIEGIKKIKISPNFTSPNILNKDYLLMFLYFGEDSFYEKGIKFLRCDYETFKEFQKPSFDCDSDSNIEDNSNVFNPEEIISHEDSFSIKCFLCQKDIGIGRNYLEFPCCTEIKVHLSCIQLWGESNNHLETVIDELFPLKEFVAPLIPLNISCPCCFKDFEWEEAKKNYIKTKNVPTESLELGEDFPVLSNGEKENYSQEENSQNKVIEDGFLEMDIDNHRNRLSYAHETKQKRDILFSDDEFSEISQKCEFIDLTVDSD.

A GIY-YIG domain is found at 6 to 89; the sequence is QLHYCYFLLS…NICKVTRDNI (84 aa).

The protein belongs to the SLX1 family. In terms of assembly, forms a heterodimer with a member of the SLX4 family. A divalent metal cation is required as a cofactor.

It localises to the nucleus. Catalytic subunit of a heterodimeric structure-specific endonuclease that resolves DNA secondary structures generated during DNA repair and recombination. Has endonuclease activity towards branched DNA substrates, introducing single-strand cuts in duplex DNA close to junctions with ss-DNA. The chain is Structure-specific endonuclease subunit SLX1 homolog from Cryptosporidium parvum (strain Iowa II).